Reading from the N-terminus, the 342-residue chain is Non-homologous end-joining protein 1 (342 aa).

Helical transmembrane passes span 27-47 and 129-149; these read LLLF…LVSL and MFYM…NLST. The tract at residues 173–342 is interaction with LIF1; sequence LRDLDGGSKV…RKFGKVRIKN (170 aa). The disordered stretch occupies residues 270–342; the sequence is ADPTNEARPN…RKFGKVRIKN (73 aa). Residues 286-296 are compositionally biased toward basic and acidic residues; the sequence is PKTDFKPKSRE. A compositionally biased stretch (polar residues) spans 297 to 312; it reads SSTSSQLRLENFSESE. Positions 331-342 are enriched in basic residues; that stretch reads KKRKFGKVRIKN.

It belongs to the XRCC4-XLF family. XLF subfamily. In terms of assembly, interacts (via C-terminus) with LIF1 (via N-terminus); the interaction is direct. Interacts with DNL4.

It is found in the cytoplasm. It localises to the nucleus membrane. Its function is as follows. Involved in non-homologous end joining (NHEJ). Facilitates the transport of LIF1 into the nucleus, where it can interact with DNA ligase DNL4 to repair double-strand breaks (DSB). Mediates mating-type regulation of NHEJ. Prevents chromosome circularisation by NHEJ in absence of telomerase. This Saccharomyces cerevisiae (strain ATCC 204508 / S288c) (Baker's yeast) protein is Non-homologous end-joining protein 1 (NEJ1).